The primary structure comprises 1066 residues: E3 ubiquitin-protein ligase PDZRN3 (1066 aa).

The RING-type; degenerate zinc finger occupies 18–56 (CALCHKVLEDPLTTPCGHVFCAGCVLPWVVQEGSCPARC). The segment at 100–158 (EHLERCDFAPARCRHAGCGQVLLRRDVEAHMRDACDARPVGRCQEGCGLPLTHGEQRAG) adopts a TRAF-type zinc-finger fold. PDZ domains lie at 249 to 339 (TLVL…LRRT) and 419 to 503 (EVDL…IARP). Serine 427 bears the Phosphoserine mark. Residues 545–603 (QKKHDEDGGTTDTATILSNQHEKDSGVGRTDESTRNDESSEQENNGDDATASSNPLAGQ) form a disordered region. The segment covering 554–563 (TTDTATILSN) has biased composition (polar residues). Basic and acidic residues predominate over residues 564 to 582 (QHEKDSGVGRTDESTRNDE). The span at 594–603 (TASSNPLAGQ) shows a compositional bias: polar residues. Positions 679–704 (ESVDKELELLNEELRSIELECLSIVR) form a coiled coil. Basic and acidic residues predominate over residues 744 to 754 (TELPEKSDKDS). Disordered stretches follow at residues 744–778 (TELP…PDNS) and 808–863 (LLSI…LPSY). Polar residues-rich tracts occupy residues 755–769 (SSAY…STPL) and 845–855 (GSRSPTPSQKL). Positions 975–1025 (KEERKQHLVKAKEQRRRREFMMQSRLDCLKEQQAADDRKEMNILELSHKKM) form a coiled coil.

Interacts with NLGN1 and EFNB2. Interacts with UBE2D2 and with MUSK via the first PDZ domain. Post-translationally, auto-ubiquitinated. Widely expressed, including in the heart, skeletal muscle and liver and, at lower levels, in the brain, colon, small intestine, placenta and lung. Down-regulated in ovarian serous papillary tumors.

The protein localises to the synapse. The protein resides in the cytoplasm. It carries out the reaction S-ubiquitinyl-[E2 ubiquitin-conjugating enzyme]-L-cysteine + [acceptor protein]-L-lysine = [E2 ubiquitin-conjugating enzyme]-L-cysteine + N(6)-ubiquitinyl-[acceptor protein]-L-lysine.. It functions in the pathway protein modification; protein ubiquitination. Functionally, E3 ubiquitin-protein ligase. Plays an important role in regulating the surface level of MUSK on myotubes. Mediates the ubiquitination of MUSK, promoting its endocytosis and lysosomal degradation. Might contribute to terminal myogenic differentiation. The sequence is that of E3 ubiquitin-protein ligase PDZRN3 (PDZRN3) from Homo sapiens (Human).